The primary structure comprises 67 residues: Large ribosomal subunit protein uL30 (67 aa).

It belongs to the universal ribosomal protein uL30 family. Part of the 50S ribosomal subunit.

This Thermotoga petrophila (strain ATCC BAA-488 / DSM 13995 / JCM 10881 / RKU-1) protein is Large ribosomal subunit protein uL30.